Consider the following 280-residue polypeptide: Aspartate/glutamate leucyltransferase (280 aa).

This sequence belongs to the R-transferase family. Bpt subfamily.

It is found in the cytoplasm. The catalysed reaction is N-terminal L-glutamyl-[protein] + L-leucyl-tRNA(Leu) = N-terminal L-leucyl-L-glutamyl-[protein] + tRNA(Leu) + H(+). It carries out the reaction N-terminal L-aspartyl-[protein] + L-leucyl-tRNA(Leu) = N-terminal L-leucyl-L-aspartyl-[protein] + tRNA(Leu) + H(+). In terms of biological role, functions in the N-end rule pathway of protein degradation where it conjugates Leu from its aminoacyl-tRNA to the N-termini of proteins containing an N-terminal aspartate or glutamate. The protein is Aspartate/glutamate leucyltransferase of Cereibacter sphaeroides (strain ATCC 17023 / DSM 158 / JCM 6121 / CCUG 31486 / LMG 2827 / NBRC 12203 / NCIMB 8253 / ATH 2.4.1.) (Rhodobacter sphaeroides).